We begin with the raw amino-acid sequence, 101 residues long: Small ribosomal subunit protein uS10 (101 aa).

This sequence belongs to the universal ribosomal protein uS10 family. As to quaternary structure, part of the 30S ribosomal subunit.

Involved in the binding of tRNA to the ribosomes. The chain is Small ribosomal subunit protein uS10 from Mycobacterium leprae (strain Br4923).